The primary structure comprises 138 residues: Translation initiation factor 5A (138 aa).

Lys-37 carries the hypusine modification.

The protein belongs to the eIF-5A family.

The protein localises to the cytoplasm. In terms of biological role, functions by promoting the formation of the first peptide bond. The protein is Translation initiation factor 5A (eIF5A) of Thermococcus sibiricus (strain DSM 12597 / MM 739).